The following is a 124-amino-acid chain: uncharacterized protein (124 aa).

This is an uncharacterized protein from Magallana gigas (Pacific oyster).